Reading from the N-terminus, the 37-residue chain is Cytochrome b6-f complex subunit 7 (37 aa).

Residues 5–25 form a helical membrane-spanning segment; it reads IFGTAFLFIVLVPVGLALGAF.

The protein belongs to the PetM family. As to quaternary structure, the 4 large subunits of the cytochrome b6-f complex are cytochrome b6, subunit IV (17 kDa polypeptide, PetD), cytochrome f and the Rieske protein, while the 4 small subunits are PetG, PetL, PetM and PetN. The complex functions as a dimer.

The protein resides in the cellular thylakoid membrane. Its function is as follows. Component of the cytochrome b6-f complex, which mediates electron transfer between photosystem II (PSII) and photosystem I (PSI), cyclic electron flow around PSI, and state transitions. The protein is Cytochrome b6-f complex subunit 7 of Synechococcus elongatus (strain ATCC 33912 / PCC 7942 / FACHB-805) (Anacystis nidulans R2).